A 283-amino-acid chain; its full sequence is Shikimate dehydrogenase (NADP(+)) (283 aa).

Shikimate-binding positions include 19–21 (SFS) and Thr66. The active-site Proton acceptor is the Lys70. An NADP(+)-binding site is contributed by Glu82. Shikimate-binding residues include Asn91 and Asp106. Residues 129 to 133 (GAGGA) and Ile225 contribute to the NADP(+) site. Position 227 (Tyr227) interacts with shikimate. Gly248 lines the NADP(+) pocket.

Belongs to the shikimate dehydrogenase family. Homodimer.

The catalysed reaction is shikimate + NADP(+) = 3-dehydroshikimate + NADPH + H(+). It functions in the pathway metabolic intermediate biosynthesis; chorismate biosynthesis; chorismate from D-erythrose 4-phosphate and phosphoenolpyruvate: step 4/7. In terms of biological role, involved in the biosynthesis of the chorismate, which leads to the biosynthesis of aromatic amino acids. Catalyzes the reversible NADPH linked reduction of 3-dehydroshikimate (DHSA) to yield shikimate (SA). This chain is Shikimate dehydrogenase (NADP(+)), found in Methanosphaera stadtmanae (strain ATCC 43021 / DSM 3091 / JCM 11832 / MCB-3).